Here is a 667-residue protein sequence, read N- to C-terminus: Threonine--tRNA ligase (667 aa).

The region spanning 1–64 (MSEAISLTFP…TDGKIEIVTR (64 aa)) is the TGS domain. The catalytic stretch occupies residues 245 to 553 (DHRRLGREMD…LIENFAGHMP (309 aa)). Positions 347, 398, and 530 each coordinate Zn(2+).

Belongs to the class-II aminoacyl-tRNA synthetase family. Homodimer. Zn(2+) serves as cofactor.

It localises to the cytoplasm. It catalyses the reaction tRNA(Thr) + L-threonine + ATP = L-threonyl-tRNA(Thr) + AMP + diphosphate + H(+). In terms of biological role, catalyzes the attachment of threonine to tRNA(Thr) in a two-step reaction: L-threonine is first activated by ATP to form Thr-AMP and then transferred to the acceptor end of tRNA(Thr). Also edits incorrectly charged L-seryl-tRNA(Thr). The chain is Threonine--tRNA ligase from Agrobacterium fabrum (strain C58 / ATCC 33970) (Agrobacterium tumefaciens (strain C58)).